The chain runs to 527 residues: 4-alpha-glucanotransferase (527 aa).

It belongs to the disproportionating enzyme family.

Its subcellular location is the cytoplasm. The enzyme catalyses Transfers a segment of a (1-&gt;4)-alpha-D-glucan to a new position in an acceptor, which may be glucose or a (1-&gt;4)-alpha-D-glucan.. This is 4-alpha-glucanotransferase (malQ) from Chlamydia muridarum (strain MoPn / Nigg).